The following is a 218-amino-acid chain: Ribose-5-phosphate isomerase A (218 aa).

Residues 27–30 (TGST), 80–83 (DGAD), and 93–96 (KGGG) contribute to the substrate site. The active-site Proton acceptor is glutamate 102. Lysine 120 is a substrate binding site.

This sequence belongs to the ribose 5-phosphate isomerase family. In terms of assembly, homodimer.

It carries out the reaction aldehydo-D-ribose 5-phosphate = D-ribulose 5-phosphate. Its pathway is carbohydrate degradation; pentose phosphate pathway; D-ribose 5-phosphate from D-ribulose 5-phosphate (non-oxidative stage): step 1/1. Its function is as follows. Catalyzes the reversible conversion of ribose-5-phosphate to ribulose 5-phosphate. This is Ribose-5-phosphate isomerase A from Picrophilus torridus (strain ATCC 700027 / DSM 9790 / JCM 10055 / NBRC 100828 / KAW 2/3).